The primary structure comprises 619 residues: Chaperone protein HscA homolog (619 aa).

The protein belongs to the heat shock protein 70 family.

In terms of biological role, chaperone involved in the maturation of iron-sulfur cluster-containing proteins. Has a low intrinsic ATPase activity which is markedly stimulated by HscB. The polypeptide is Chaperone protein HscA homolog (Pseudomonas paraeruginosa (strain DSM 24068 / PA7) (Pseudomonas aeruginosa (strain PA7))).